Reading from the N-terminus, the 358-residue chain is Probable aminomethyltransferase (358 aa).

It belongs to the GcvT family. As to quaternary structure, the glycine cleavage system is composed of four proteins: P, T, L and H.

The catalysed reaction is N(6)-[(R)-S(8)-aminomethyldihydrolipoyl]-L-lysyl-[protein] + (6S)-5,6,7,8-tetrahydrofolate = N(6)-[(R)-dihydrolipoyl]-L-lysyl-[protein] + (6R)-5,10-methylene-5,6,7,8-tetrahydrofolate + NH4(+). The glycine cleavage system catalyzes the degradation of glycine. The polypeptide is Probable aminomethyltransferase (Natronomonas pharaonis (strain ATCC 35678 / DSM 2160 / CIP 103997 / JCM 8858 / NBRC 14720 / NCIMB 2260 / Gabara) (Halobacterium pharaonis)).